The sequence spans 307 residues: uncharacterized protein (307 aa).

Helical transmembrane passes span 1–21 (MLILISFTALILFFLAGMNML), 52–72 (IVFTGILQSSSAFMVIVIGFV), 99–119 (FIAIKMDIVIWVLLIGGLLFF), 133–153 (FLGLGIIFFCISGFSHLAGPL), 174–194 (LLIGMVLTAIIHSSSVCIGIL), 208–228 (AMSVVLGSNIGTCITAVMAAV), 242–262 (VVFNVLGVALVLPFLTAATGF), and 277–297 (FSLLFNVVTALLFLPLTNLFY).

It localises to the cell membrane. This is an uncharacterized protein from Bacillus subtilis (strain 168).